The chain runs to 50 residues: Sperm protamine P1 (50 aa).

Disulfide bonds link cysteine 7–cysteine 15 and cysteine 39–cysteine 47.

This sequence belongs to the protamine P1 family. In terms of assembly, cross-linked by interchain disulfide bonds around the DNA-helix. As to expression, testis.

It is found in the nucleus. The protein resides in the chromosome. In terms of biological role, protamines substitute for histones in the chromatin of sperm during the haploid phase of spermatogenesis. They compact sperm DNA into a highly condensed, stable and inactive complex. The protein is Sperm protamine P1 (PRM1) of Oryctolagus cuniculus (Rabbit).